Consider the following 590-residue polypeptide: CTP synthase (590 aa).

The amidoligase domain stretch occupies residues 1 to 278 (MRKHPQSATK…DAFVVRRLNL (278 aa)). Ser20 lines the CTP pocket. Ser20 contacts UTP. Residues 21 to 26 (SLGKGL) and Asp78 contribute to the ATP site. Asp78 and Glu152 together coordinate Mg(2+). Residues 159–161 (DIE), 199–204 (KTKPTQ), and Lys235 each bind CTP. UTP contacts are provided by residues 199 to 204 (KTKPTQ) and Lys235. Positions 303–551 (RIALVGKYVD…VGAAIDYKSA (249 aa)) constitute a Glutamine amidotransferase type-1 domain. Gly366 is a binding site for L-glutamine. Catalysis depends on Cys393, which acts as the Nucleophile; for glutamine hydrolysis. L-glutamine contacts are provided by residues 394–397 (LGLQ), Glu416, and Arg477. Catalysis depends on residues His524 and Glu526. A disordered region spans residues 566–590 (EHLPNSSNQHRDGVERSFPAPAARG).

This sequence belongs to the CTP synthase family. Homotetramer.

It carries out the reaction UTP + L-glutamine + ATP + H2O = CTP + L-glutamate + ADP + phosphate + 2 H(+). It catalyses the reaction L-glutamine + H2O = L-glutamate + NH4(+). The catalysed reaction is UTP + NH4(+) + ATP = CTP + ADP + phosphate + 2 H(+). It participates in pyrimidine metabolism; CTP biosynthesis via de novo pathway; CTP from UDP: step 2/2. With respect to regulation, allosterically activated by GTP, when glutamine is the substrate; GTP has no effect on the reaction when ammonia is the substrate. The allosteric effector GTP functions by stabilizing the protein conformation that binds the tetrahedral intermediate(s) formed during glutamine hydrolysis. Inhibited by the product CTP, via allosteric rather than competitive inhibition. In terms of biological role, catalyzes the ATP-dependent amination of UTP to CTP with either L-glutamine or ammonia as the source of nitrogen. Regulates intracellular CTP levels through interactions with the four ribonucleotide triphosphates. The sequence is that of CTP synthase from Mycobacterium leprae (strain Br4923).